The chain runs to 149 residues: Probable flagellum biosynthesis repressor protein FlbT (149 aa).

This sequence belongs to the FlbT family.

Has a post-transcriptional repressor function in flagellum biogenesis. Associates with the 5'-UTR of fljK mRNA and promotes its degradation. In Rhizobium leguminosarum bv. trifolii (strain WSM2304), this protein is Probable flagellum biosynthesis repressor protein FlbT.